The following is a 155-amino-acid chain: Large ribosomal subunit protein eL24 (155 aa).

The span at 98-129 (PEVRKAKRDDKAKADKEKKKADKAARKAEKAK) shows a compositional bias: basic and acidic residues. The tract at residues 98-155 (PEVRKAKRDDKAKADKEKKKADKAARKAEKAKLAAAQGSKVSKQQAKGAFQKVAATSR) is disordered.

Belongs to the eukaryotic ribosomal protein eL24 family.

The chain is Large ribosomal subunit protein eL24 (RPL24) from Candida glabrata (strain ATCC 2001 / BCRC 20586 / JCM 3761 / NBRC 0622 / NRRL Y-65 / CBS 138) (Yeast).